The sequence spans 785 residues: Transcription factor Sp1 (785 aa).

Positions 1–93 are disordered; sequence MSDQDHSMDE…PSQSGGTGEL (93 aa). N-acetylserine is present on S2. 2 positions are modified to phosphoserine: S2 and S7. A repressor domain region spans residues 2–82; that stretch reads SDQDHSMDEM…SPNENSNNSQ (81 aa). A Glycyl lysine isopeptide (Lys-Gly) (interchain with G-Cter in SUMO); alternate cross-link involves residue K16. K16 participates in a covalent cross-link: Glycyl lysine isopeptide (Lys-Gly) (interchain with G-Cter in SUMO2); alternate. The segment covering 20 to 34 has biased composition (gly residues); it reads GVGGNNGGNGNGGGA. Phosphoserine is present on S59. Over residues 72–85 the composition is skewed to low complexity; the sequence is ESPNENSNNSQGPS. A Phosphoserine; by ATM modification is found at S101. Over residues 109 to 123 the composition is skewed to polar residues; that stretch reads IISSSSGATPTSKEQ. The interval 109-141 is disordered; the sequence is IISSSSGATPTSKEQSGSSTNGSNGSESSKNRT. The segment covering 124-136 has biased composition (low complexity); the sequence is SGSSTNGSNGSES. The tract at residues 146–251 is transactivation domain A (Gln-rich); sequence QYVVAAAPNL…ANNVLSGQTQ (106 aa). Residues 261-495 are transactivation domain B (Gln-rich); that stretch reads NGNITLLPVN…PMQGVSLGQT (235 aa). T278 is subject to Phosphothreonine; by MAPK8. Residues 329–395 are disordered; sequence TTTTTSNMGI…KEGEQNQQTQ (67 aa). The segment covering 342 to 357 has biased composition (low complexity); sequence TTSGSSGTNSQGQTPQ. Over residues 358–379 the composition is skewed to polar residues; the sequence is RVSGLQGSDALNIQQNQTSGGS. A compositionally biased stretch (low complexity) spans 381-395; it reads QAGQQKEGEQNQQTQ. T453 bears the Phosphothreonine; by MAPK1 and MAPK3 mark. The short motif at 462–470 is the 9aaTAD element; it reads VSWQTLQLQ. O-linked (GlcNAc) serine glycosylation is present at S491. The interval 496-610 is transactivation domain C (highly charged); sequence SSSNTTLTPI…REACTCPYCK (115 aa). The disordered stretch occupies residues 567–598; that stretch reads LHGAGGDGIHDDTAGGEEGENSPDAQPQAGRR. S612 is modified (phosphoserine; alternate). O-linked (GlcNAc) serine; alternate glycosylation occurs at S612. The VZV IE62-binding stretch occupies residues 619 to 785; it reads DPGKKKQHIC…QSINISGNGF (167 aa). Residues 626-650 form a C2H2-type 1 zinc finger; sequence HICHIQGCGKVYGKTSHLRAHLRWH. T640 carries the phosphothreonine; alternate modification. The O-linked (GlcNAc) threonine; alternate glycan is linked to T640. An O-linked (GlcNAc) serine; alternate glycan is attached at S641. Phosphoserine; by PKC/PRKCZ; alternate is present on S641. The residue at position 651 (T651) is a Phosphothreonine; by PKC/PRKCZ. Residues 656–680 form a C2H2-type 2 zinc finger; sequence FMCTWSYCGKRFTRSDELQRHKRTH. A Phosphothreonine modification is found at T668. S670 is subject to Phosphoserine; by PKC/PRKCZ. Phosphothreonine; by PKC/PRKCZ is present on T681. A C2H2-type 3 zinc finger spans residues 686–708; that stretch reads FACPECPKRFMRSDHLSKHIKTH. Residues S698 and S702 each carry the phosphoserine; alternate modification. 2 O-linked (GlcNAc) serine; alternate glycosylation sites follow: S698 and S702. K703 carries the N6-acetyllysine modification. The interval 708 to 785 is domain D; sequence HQNKKGGPGV…QSINISGNGF (78 aa). A Phosphothreonine; by MAPK1, MAPK3 and MAPK8 modification is found at T739.

Belongs to the Sp1 C2H2-type zinc-finger protein family. In terms of assembly, interacts with ATF7IP, ATF7IP2, BAHD1, POGZ, HCFC1, AATF and PHC2. Interacts with HLTF; the interaction may be required for basal transcriptional activity of HLTF. Interacts (deacetylated form) with EP300; the interaction enhances gene expression. Interacts with HDAC1 and JUN. Interacts with ELF1; the interaction is inhibited by glycosylation of SP1. Interaction with NFYA; the interaction is inhibited by glycosylation of SP1. Interacts with ATF7IP and TBP. Interacts with MEIS2 isoform 4 and PBX1 isoform PBX1a. Interacts with EGR1. Interacts with SMARCA4/BRG1. Interacts with RNF112 in an oxidative stress-regulated manner. Interacts with ZBTB7A; ZBTB7A prevents the binding to GC-rich motifs in promoters and represses the transcriptional activity of SP1. Interacts with DDX3X; this interaction potentiates SP1-induced CDKN1A/WAF1/CIP1 transcription. Interacts with MSX1; the interaction may inhibit MSX1 autoinactivation. As to quaternary structure, (Microbial infection) Interacts with varicella-zoster virus IE62 protein. (Microbial infection) Interacts with SV40 VP2/3 proteins. Interacts with SV40 major capsid protein VP1; this interaction leads to a cooperativity between the 2 proteins in DNA binding. In terms of assembly, (Microbial infection) Interacts with HIV-1 Vpr; the interaction is inhibited by SP1 O-glycosylation. Post-translationally, phosphorylated on multiple serine and threonine residues. Phosphorylation is coupled to ubiquitination, sumoylation and proteolytic processing. Phosphorylation on Ser-59 enhances proteolytic cleavage. Phosphorylation on Ser-7 enhances ubiquitination and protein degradation. Hyperphosphorylation on Ser-101 in response to DNA damage has no effect on transcriptional activity. MAPK1/MAPK3-mediated phosphorylation on Thr-453 and Thr-739 enhances VEGF transcription but, represses FGF2-triggered PDGFR-alpha transcription. Also implicated in the repression of RECK by ERBB2. Hyperphosphorylated on Thr-278 and Thr-739 during mitosis by MAPK8 shielding SP1 from degradation by the ubiquitin-dependent pathway. Phosphorylated in the zinc-finger domain by calmodulin-activated PKCzeta. Phosphorylation on Ser-641 by PKCzeta is critical for TSA-activated LHR gene expression through release of its repressor, p107. Phosphorylation on Thr-668, Ser-670 and Thr-681 is stimulated by angiotensin II via the AT1 receptor inducing increased binding to the PDGF-D promoter. This phosphorylation is increased in injured artey wall. Ser-59 and Thr-681 can both be dephosphorylated by PP2A during cell-cycle interphase. Dephosphorylation on Ser-59 leads to increased chromatin association during interphase and increases the transcriptional activity. On insulin stimulation, sequentially glycosylated and phosphorylated on several C-terminal serine and threonine residues. Acetylated. Acetylation/deacetylation events affect transcriptional activity. Deacetylation leads to an increase in the expression of the 12(s)-lipooxygenase gene through recruitment of p300 to the promoter. Deacetylated by HDAC6 which leads to increased expression of ENG and positive regulation of angiogenesis. In terms of processing, ubiquitinated. Ubiquitination occurs on the C-terminal proteolytically-cleaved peptide and is triggered by phosphorylation. Post-translationally, sumoylated with SUMO1. Sumoylation modulates proteolytic cleavage of the N-terminal repressor domain. Sumoylation levels are attenuated during tumorigenesis. Phosphorylation mediates SP1 desumoylation. Proteolytic cleavage in the N-terminal repressor domain is prevented by sumoylation. The C-terminal cleaved product is susceptible to degradation. In terms of processing, O-glycosylated; Contains 8 N-acetylglucosamine side chains. Levels are controlled by insulin and the SP1 phosphorylation states. Insulin-mediated O-glycosylation locates SP1 to the nucleus, where it is sequentially deglycosylated and phosphorylated. O-glycosylation affects transcriptional activity through disrupting the interaction with a number of transcription factors including ELF1 and NFYA. Also inhibits interaction with the HIV1 promoter. Inhibited by peroxisomome proliferator receptor gamma (PPARgamma). In terms of tissue distribution, up-regulated in adenocarcinomas of the stomach (at protein level). Isoform 3 is ubiquitously expressed at low levels.

Its subcellular location is the nucleus. The protein resides in the cytoplasm. Transcription factor that can activate or repress transcription in response to physiological and pathological stimuli. Binds with high affinity to GC-rich motifs and regulates the expression of a large number of genes involved in a variety of processes such as cell growth, apoptosis, differentiation and immune responses. Highly regulated by post-translational modifications (phosphorylations, sumoylation, proteolytic cleavage, glycosylation and acetylation). Also binds the PDGFR-alpha G-box promoter. May have a role in modulating the cellular response to DNA damage. Implicated in chromatin remodeling. Plays an essential role in the regulation of FE65 gene expression. In complex with ATF7IP, maintains telomerase activity in cancer cells by inducing TERT and TERC gene expression. Isoform 3 is a stronger activator of transcription than isoform 1. Positively regulates the transcription of the core clock component BMAL1. Plays a role in the recruitment of SMARCA4/BRG1 on the c-FOS promoter. Plays a role in protecting cells against oxidative stress following brain injury by regulating the expression of RNF112. The sequence is that of Transcription factor Sp1 (SP1) from Homo sapiens (Human).